The chain runs to 272 residues: Shikimate dehydrogenase (NADP(+)) (272 aa).

Shikimate contacts are provided by residues 14–16 and Thr-61; that span reads SKS. The active-site Proton acceptor is the Lys-65. Residue Glu-77 participates in NADP(+) binding. Asn-86 and Asp-102 together coordinate shikimate. Residues 126–130, 149–154, and Met-213 contribute to the NADP(+) site; these read GAGGA and NRTVSR. Tyr-215 contacts shikimate. Gly-237 provides a ligand contact to NADP(+).

This sequence belongs to the shikimate dehydrogenase family. As to quaternary structure, homodimer.

It catalyses the reaction shikimate + NADP(+) = 3-dehydroshikimate + NADPH + H(+). Its pathway is metabolic intermediate biosynthesis; chorismate biosynthesis; chorismate from D-erythrose 4-phosphate and phosphoenolpyruvate: step 4/7. Its function is as follows. Involved in the biosynthesis of the chorismate, which leads to the biosynthesis of aromatic amino acids. Catalyzes the reversible NADPH linked reduction of 3-dehydroshikimate (DHSA) to yield shikimate (SA). This chain is Shikimate dehydrogenase (NADP(+)), found in Escherichia coli O7:K1 (strain IAI39 / ExPEC).